The sequence spans 861 residues: Leucine--tRNA ligase (861 aa).

A 'HIGH' region motif is present at residues Pro43–His53. A 'KMSKS' region motif is present at residues Lys588 to Ser592. Residue Lys591 participates in ATP binding.

Belongs to the class-I aminoacyl-tRNA synthetase family.

The protein localises to the cytoplasm. It catalyses the reaction tRNA(Leu) + L-leucine + ATP = L-leucyl-tRNA(Leu) + AMP + diphosphate. This is Leucine--tRNA ligase from Symbiobacterium thermophilum (strain DSM 24528 / JCM 14929 / IAM 14863 / T).